The primary structure comprises 360 residues: S-adenosylmethionine:tRNA ribosyltransferase-isomerase (360 aa).

The protein belongs to the QueA family. Monomer.

Its subcellular location is the cytoplasm. The enzyme catalyses 7-aminomethyl-7-carbaguanosine(34) in tRNA + S-adenosyl-L-methionine = epoxyqueuosine(34) in tRNA + adenine + L-methionine + 2 H(+). Its pathway is tRNA modification; tRNA-queuosine biosynthesis. Transfers and isomerizes the ribose moiety from AdoMet to the 7-aminomethyl group of 7-deazaguanine (preQ1-tRNA) to give epoxyqueuosine (oQ-tRNA). The sequence is that of S-adenosylmethionine:tRNA ribosyltransferase-isomerase from Rhizobium meliloti (strain 1021) (Ensifer meliloti).